Reading from the N-terminus, the 253-residue chain is Sulfate transporter CysZ (253 aa).

Transmembrane regions (helical) follow at residues 31–51, 75–95, 151–171, and 222–242; these read FVIL…WWLF, LLWP…FSTI, IVLL…PVLW, and IPLL…AMWV.

It belongs to the CysZ family.

It is found in the cell inner membrane. High affinity, high specificity proton-dependent sulfate transporter, which mediates sulfate uptake. Provides the sulfur source for the cysteine synthesis pathway. This chain is Sulfate transporter CysZ, found in Escherichia coli O7:K1 (strain IAI39 / ExPEC).